The primary structure comprises 561 residues: Putative transport protein YbjL (561 aa).

Helical transmembrane passes span 8-28, 32-52, 66-86, 94-114, and 158-178; these read LLNG…LCLG, LGSI…LLGQ, FMLF…SIFF, MLAL…GKLF, and NLSL…IVGA. 2 consecutive RCK C-terminal domains span residues 200–288 and 292–373; these read RGLD…SFRN and VFDR…RIGF. Helical transmembrane passes span 383 to 403, 406 to 426, 451 to 471, 475 to 495, and 540 to 560; these read LLAF…TFQF, FSFG…LGFM, VFMA…LGAI, MLIA…LFGA, and AIAN…WPGL.

Belongs to the AAE transporter (TC 2.A.81) family. YbjL subfamily.

Its subcellular location is the cell membrane. This Escherichia coli O127:H6 (strain E2348/69 / EPEC) protein is Putative transport protein YbjL.